The chain runs to 225 residues: RNA chaperone ProQ (225 aa).

The disordered stretch occupies residues 107–169; it reads KARVQAQRAA…VAAKAPREER (63 aa). The span at 109–118 shows a compositional bias: low complexity; it reads RVQAQRAAQQ. Basic residues predominate over residues 137-146; sequence RERKPRPQQP. The span at 147-156 shows a compositional bias: basic and acidic residues; the sequence is RRKEGAEQRK.

It belongs to the ProQ family.

Its subcellular location is the cytoplasm. RNA chaperone with significant RNA binding, RNA strand exchange and RNA duplexing activities. May regulate ProP activity through an RNA-based, post-transcriptional mechanism. This chain is RNA chaperone ProQ, found in Klebsiella pneumoniae subsp. pneumoniae (strain ATCC 700721 / MGH 78578).